The following is a 604-amino-acid chain: Threonine--tRNA ligase (604 aa).

A catalytic region spans residues 197–499 (DHRKLGRELG…LIEEYAGDFP (303 aa)). Zn(2+)-binding residues include Cys-296, His-347, and His-476.

The protein belongs to the class-II aminoacyl-tRNA synthetase family. In terms of assembly, homodimer. It depends on Zn(2+) as a cofactor.

The protein resides in the cytoplasm. The enzyme catalyses tRNA(Thr) + L-threonine + ATP = L-threonyl-tRNA(Thr) + AMP + diphosphate + H(+). Catalyzes the attachment of threonine to tRNA(Thr) in a two-step reaction: L-threonine is first activated by ATP to form Thr-AMP and then transferred to the acceptor end of tRNA(Thr). Also edits incorrectly charged L-seryl-tRNA(Thr). This Synechococcus elongatus (strain ATCC 33912 / PCC 7942 / FACHB-805) (Anacystis nidulans R2) protein is Threonine--tRNA ligase.